The chain runs to 366 residues: NADH-quinone oxidoreductase subunit D (366 aa).

Belongs to the complex I 49 kDa subunit family. As to quaternary structure, NDH-1 is composed of 14 different subunits. Subunits NuoB, C, D, E, F, and G constitute the peripheral sector of the complex.

The protein localises to the cell membrane. The enzyme catalyses a quinone + NADH + 5 H(+)(in) = a quinol + NAD(+) + 4 H(+)(out). In terms of biological role, NDH-1 shuttles electrons from NADH, via FMN and iron-sulfur (Fe-S) centers, to quinones in the respiratory chain. The immediate electron acceptor for the enzyme in this species is believed to be a menaquinone. Couples the redox reaction to proton translocation (for every two electrons transferred, four hydrogen ions are translocated across the cytoplasmic membrane), and thus conserves the redox energy in a proton gradient. The polypeptide is NADH-quinone oxidoreductase subunit D (Bacillus cereus (strain ATCC 14579 / DSM 31 / CCUG 7414 / JCM 2152 / NBRC 15305 / NCIMB 9373 / NCTC 2599 / NRRL B-3711)).